Here is a 159-residue protein sequence, read N- to C-terminus: Ribosomal RNA large subunit methyltransferase H (159 aa).

S-adenosyl-L-methionine is bound by residues Leu76 and Gly108.

It belongs to the RNA methyltransferase RlmH family. Homodimer.

It is found in the cytoplasm. The enzyme catalyses pseudouridine(1915) in 23S rRNA + S-adenosyl-L-methionine = N(3)-methylpseudouridine(1915) in 23S rRNA + S-adenosyl-L-homocysteine + H(+). In terms of biological role, specifically methylates the pseudouridine at position 1915 (m3Psi1915) in 23S rRNA. This Finegoldia magna (strain ATCC 29328 / DSM 20472 / WAL 2508) (Peptostreptococcus magnus) protein is Ribosomal RNA large subunit methyltransferase H.